A 214-amino-acid polypeptide reads, in one-letter code: A-type ATP synthase subunit D (214 aa).

The protein belongs to the V-ATPase D subunit family. Has multiple subunits with at least A(3), B(3), C, D, E, F, H, I and proteolipid K(x).

The protein resides in the cell membrane. Its function is as follows. Component of the A-type ATP synthase that produces ATP from ADP in the presence of a proton gradient across the membrane. The sequence is that of A-type ATP synthase subunit D from Pyrococcus horikoshii (strain ATCC 700860 / DSM 12428 / JCM 9974 / NBRC 100139 / OT-3).